The following is a 492-amino-acid chain: GDP-Man:Man(3)GlcNAc(2)-PP-Dol alpha-1,2-mannosyltransferase (492 aa).

Residues M1–S19 lie on the Lumenal side of the membrane. The helical transmembrane segment at L20–W40 threads the bilayer. Residues V41 to K233 are Cytoplasmic-facing. Residues L234–V254 constitute an intramembrane region (helical). The Cytoplasmic segment spans residues M255–H399. The segment at residues F400 to G420 is an intramembrane region (helical). At G421–T492 the chain is on the cytoplasmic side.

It belongs to the glycosyltransferase group 1 family. Glycosyltransferase 4 subfamily.

The protein localises to the endoplasmic reticulum membrane. It carries out the reaction an alpha-D-Man-(1-&gt;3)-[alpha-D-Man-(1-&gt;6)]-beta-D-Man-(1-&gt;4)-beta-D-GlcNAc-(1-&gt;4)-alpha-D-GlcNAc-diphospho-di-trans,poly-cis-dolichol + 2 GDP-alpha-D-mannose = an alpha-D-Man-(1-&gt;2)-alpha-D-Man-(1-&gt;2)-alpha-D-Man-(1-&gt;3)-[alpha-D-Man-(1-&gt;6)]-beta-D-Man-(1-&gt;4)-beta-D-GlcNAc-(1-&gt;4)-alpha-D-GlcNAc-diphospho-di-trans,poly-cis-dolichol + 2 GDP + 2 H(+). Its pathway is protein modification; protein glycosylation. GDP-Man:Man(3)GlcNAc(2)-PP-Dol alpha-1,2-mannosyltransferase that operates in the biosynthetic pathway of dolichol-linked oligosaccharides, the glycan precursors employed in protein asparagine (N)-glycosylation. The assembly of dolichol-linked oligosaccharides begins on the cytosolic side of the endoplasmic reticulum membrane and finishes in its lumen. The sequential addition of sugars to dolichol pyrophosphate produces dolichol-linked oligosaccharides containing fourteen sugars, including two GlcNAcs, nine mannoses and three glucoses. Once assembled, the oligosaccharide is transferred from the lipid to nascent proteins by oligosaccharyltransferases. Catalyzes, on the cytoplasmic face of the endoplasmic reticulum, the addition of the fourth and fifth mannose residues to the dolichol-linked oligosaccharide chain, to produce Man(5)GlcNAc(2)-PP-dolichol core oligosaccharide. Man(5)GlcNAc(2)-PP-dolichol is a substrate for ALG3, the following enzyme in the biosynthetic pathway. This Mus musculus (Mouse) protein is GDP-Man:Man(3)GlcNAc(2)-PP-Dol alpha-1,2-mannosyltransferase.